Here is a 296-residue protein sequence, read N- to C-terminus: Prostate androgen-regulated mucin-like protein 1 homolog (296 aa).

Residues 1–20 (MVCKVLIALCIFTAGLRVQG) form the signal peptide. Residues 21–244 (SPTVPLPVSL…EVENALSSGS (224 aa)) are Extracellular-facing. Asn-61 and Asn-95 each carry an N-linked (GlcNAc...) asparagine glycan. Residues 72-220 (LTSQLPTDHR…SPQDTEPGKV (149 aa)) form a disordered region. The segment covering 78–95 (TDHREEAVTSPPLKRDVN) has biased composition (basic and acidic residues). Polar residues predominate over residues 96–110 (STDSSPAGFPSTSSD). The segment covering 139-167 (LLSSQAPTSATTSPATSLSESLSASVTSS) has biased composition (low complexity). The segment covering 168 to 177 (HNSTVANIQP) has biased composition (polar residues). N-linked (GlcNAc...) asparagine glycosylation occurs at Asn-169. A compositionally biased stretch (basic and acidic residues) spans 206 to 217 (VPKEKSPQDTEP). The helical transmembrane segment at 245–265 (IAAITVTVIAVVLLVFGGAAY) threads the bilayer. Over 266 to 296 (LKIRHSSYGRLLDDHDYGSWGNYNNPLYDDS) the chain is Cytoplasmic. Ser-284 bears the Phosphoserine mark.

Belongs to the PARM family. Post-translationally, highly N-glycosylated and O-glycosylated.

It is found in the cell membrane. The protein resides in the golgi apparatus membrane. It localises to the endosome membrane. Functionally, may regulate TLP1 expression and telomerase activity, thus enabling certain prostatic cells to resist apoptosis. The polypeptide is Prostate androgen-regulated mucin-like protein 1 homolog (Parm1) (Mus musculus (Mouse)).